The following is a 385-amino-acid chain: Glucans biosynthesis protein C (385 aa).

Transmembrane regions (helical) follow at residues 17–37 (AWLM…SHTW), 60–80 (MQVF…RYPL), 91–111 (VGIP…IMLQ), 137–157 (ISHL…VWIF), 173–193 (KFSM…YAVI), 212–232 (FIVM…LAFI), 239–259 (LFTT…VAYL), 274–294 (TESV…FSFG), 311–331 (ASLF…AYIT), and 338–358 (WLGF…LYEI).

This sequence belongs to the acyltransferase 3 family. OpgC subfamily.

It is found in the cell membrane. It participates in glycan metabolism; osmoregulated periplasmic glucan (OPG) biosynthesis. In terms of biological role, necessary for the succinyl substitution of periplasmic glucans. Could catalyze the transfer of succinyl residues from the cytoplasmic side of the membrane to the nascent glucan backbones on the periplasmic side of the membrane. This is Glucans biosynthesis protein C from Shigella sonnei (strain Ss046).